Consider the following 333-residue polypeptide: Protein XAP5 CIRCADIAN TIMEKEEPER (333 aa).

Coiled coils occupy residues 12–43 (AQDA…SDGQ) and 70–116 (TREQ…VRGD). Residues 89–98 (EKEKLQKLQQ) are compositionally biased toward basic and acidic residues. The tract at residues 89–171 (EKEKLQKLQQ…REREAEEQAE (83 aa)) is disordered. Residues 123–136 (DEIENGSDEDEFEN) show a composition bias toward acidic residues. Residues 160 to 171 (PDREREAEEQAE) show a composition bias toward basic and acidic residues.

Belongs to the FAM50 family.

The protein resides in the nucleus. Its function is as follows. Involved in light regulation of the circadian clock and photomorphogenesis. In Oryza sativa subsp. indica (Rice), this protein is Protein XAP5 CIRCADIAN TIMEKEEPER (XCT).